Here is a 403-residue protein sequence, read N- to C-terminus: Phosphoglycerate kinase (403 aa).

Substrate is bound by residues Asp21–Asn23, Arg37, His60–Arg63, Arg125, and Arg158. ATP contacts are provided by residues Lys209, Glu332, and Gly359–Ser362.

Belongs to the phosphoglycerate kinase family. Monomer.

The protein localises to the cytoplasm. It carries out the reaction (2R)-3-phosphoglycerate + ATP = (2R)-3-phospho-glyceroyl phosphate + ADP. The protein operates within carbohydrate degradation; glycolysis; pyruvate from D-glyceraldehyde 3-phosphate: step 2/5. The sequence is that of Phosphoglycerate kinase from Koribacter versatilis (strain Ellin345).